Consider the following 422-residue polypeptide: Target of rapamycin complex 2 subunit bit61 (422 aa).

Positions 48-69 (VTTKESNVGDSDTTENIKSPFN) are enriched in polar residues. The interval 48-101 (VTTKESNVGDSDTTENIKSPFNGQWPFSRRSSQSSSHPVFEETHWSKHSKRPGK) is disordered. 3 positions are modified to phosphoserine: Ser-109, Ser-132, and Ser-201.

Belongs to the BIT61 family. As to quaternary structure, the target of rapamycin complex 2 (TORC2) is composed of at least bit61, pop3/wat1, sin1, ste20 and tor1. In terms of processing, either Thr-23, Thr-25 or Ser-26 and Ser-78 or Ser-79 are phosphorylated as well.

Its subcellular location is the cytoplasm. The protein localises to the nucleus. In terms of biological role, component of TORC2, which regulates multiple cellular processes to control cell growth in response to environmental signals. TORC2 is required for cell survival under various stress conditions. TORC2 positively controls G1 cell-cycle arrest, sexual development and amino acid uptake. Positively regulates amino acid uptake through the control of expression of amino acid permeases. In Schizosaccharomyces pombe (strain 972 / ATCC 24843) (Fission yeast), this protein is Target of rapamycin complex 2 subunit bit61.